Reading from the N-terminus, the 96-residue chain is Large ribosomal subunit protein uL23 (96 aa).

This sequence belongs to the universal ribosomal protein uL23 family. As to quaternary structure, part of the 50S ribosomal subunit. Contacts protein L29, and trigger factor when it is bound to the ribosome.

Its function is as follows. One of the early assembly proteins it binds 23S rRNA. One of the proteins that surrounds the polypeptide exit tunnel on the outside of the ribosome. Forms the main docking site for trigger factor binding to the ribosome. The chain is Large ribosomal subunit protein uL23 from Caldicellulosiruptor bescii (strain ATCC BAA-1888 / DSM 6725 / KCTC 15123 / Z-1320) (Anaerocellum thermophilum).